The sequence spans 188 residues: Thymidine kinase (188 aa).

ATP is bound at residue 17–24 (GPMFAGKT). The active-site Proton acceptor is glutamate 92. Substrate is bound at residue phenylalanine 121. Residues cysteine 146 and cysteine 149 each coordinate Zn(2+). 166-170 (LILAG) serves as a coordination point for substrate. Zn(2+) is bound by residues cysteine 179 and cysteine 182.

Belongs to the thymidine kinase family.

The catalysed reaction is thymidine + ATP = dTMP + ADP + H(+). Phosphorylates thymidine. ASFV replicates in the cytoplasm of infected cells and contains genes encoding a number of enzymes needed for DNA synthesis, including thymidine kinase. Important for growth in swine macrophages in vitro and is a virus virulence factor in swine. This Ornithodoros (relapsing fever ticks) protein is Thymidine kinase.